The sequence spans 176 residues: Crossover junction endodeoxyribonuclease RuvC (176 aa).

Catalysis depends on residues aspartate 9, glutamate 69, and aspartate 141. Aspartate 9, glutamate 69, and aspartate 141 together coordinate Mg(2+).

Belongs to the RuvC family. Homodimer which binds Holliday junction (HJ) DNA. The HJ becomes 2-fold symmetrical on binding to RuvC with unstacked arms; it has a different conformation from HJ DNA in complex with RuvA. In the full resolvosome a probable DNA-RuvA(4)-RuvB(12)-RuvC(2) complex forms which resolves the HJ. Mg(2+) serves as cofactor.

It is found in the cytoplasm. The enzyme catalyses Endonucleolytic cleavage at a junction such as a reciprocal single-stranded crossover between two homologous DNA duplexes (Holliday junction).. Functionally, the RuvA-RuvB-RuvC complex processes Holliday junction (HJ) DNA during genetic recombination and DNA repair. Endonuclease that resolves HJ intermediates. Cleaves cruciform DNA by making single-stranded nicks across the HJ at symmetrical positions within the homologous arms, yielding a 5'-phosphate and a 3'-hydroxyl group; requires a central core of homology in the junction. The consensus cleavage sequence is 5'-(A/T)TT(C/G)-3'. Cleavage occurs on the 3'-side of the TT dinucleotide at the point of strand exchange. HJ branch migration catalyzed by RuvA-RuvB allows RuvC to scan DNA until it finds its consensus sequence, where it cleaves and resolves the cruciform DNA. The protein is Crossover junction endodeoxyribonuclease RuvC of Chromobacterium violaceum (strain ATCC 12472 / DSM 30191 / JCM 1249 / CCUG 213 / NBRC 12614 / NCIMB 9131 / NCTC 9757 / MK).